Reading from the N-terminus, the 263-residue chain is tRNA dimethylallyltransferase (263 aa).

Belongs to the IPP transferase family. As to quaternary structure, monomer. Mg(2+) is required as a cofactor.

It carries out the reaction adenosine(37) in tRNA + dimethylallyl diphosphate = N(6)-dimethylallyladenosine(37) in tRNA + diphosphate. In terms of biological role, catalyzes the transfer of a dimethylallyl group onto the adenine at position 37 in tRNAs that read codons beginning with uridine, leading to the formation of N6-(dimethylallyl)adenosine (i(6)A). The sequence is that of tRNA dimethylallyltransferase from Leifsonia xyli subsp. xyli (strain CTCB07).